Here is a 554-residue protein sequence, read N- to C-terminus: 3-(3-hydroxy-phenyl)propionate/3-hydroxycinnamic acid hydroxylase (554 aa).

FAD is bound by residues 17-46 (QVAI…VVEK) and 285-295 (FRIDRVLLAGD).

It belongs to the PheA/TfdB FAD monooxygenase family. FAD serves as cofactor.

The catalysed reaction is 3-(3-hydroxyphenyl)propanoate + NADH + O2 + H(+) = 3-(2,3-dihydroxyphenyl)propanoate + NAD(+) + H2O. The enzyme catalyses (2E)-3-(3-hydroxyphenyl)prop-2-enoate + NADH + O2 + H(+) = (2E)-3-(2,3-dihydroxyphenyl)prop-2-enoate + NAD(+) + H2O. It functions in the pathway aromatic compound metabolism; 3-phenylpropanoate degradation. Catalyzes the insertion of one atom of molecular oxygen into position 2 of the phenyl ring of 3-(3-hydroxyphenyl)propionate (3-HPP) and hydroxycinnamic acid (3HCI). The protein is 3-(3-hydroxy-phenyl)propionate/3-hydroxycinnamic acid hydroxylase of Escherichia coli O81 (strain ED1a).